The primary structure comprises 631 residues: Phosphomethylpyrimidine synthase (631 aa).

Substrate contacts are provided by residues asparagine 239, methionine 268, tyrosine 297, histidine 333, 353-355 (SRG), 394-397 (DGLR), and glutamate 433. Histidine 437 lines the Zn(2+) pocket. A substrate-binding site is contributed by tyrosine 460. A Zn(2+)-binding site is contributed by histidine 501. The [4Fe-4S] cluster site is built by cysteine 581, cysteine 584, and cysteine 589.

The protein belongs to the ThiC family. As to quaternary structure, homodimer. [4Fe-4S] cluster is required as a cofactor.

The catalysed reaction is 5-amino-1-(5-phospho-beta-D-ribosyl)imidazole + S-adenosyl-L-methionine = 4-amino-2-methyl-5-(phosphooxymethyl)pyrimidine + CO + 5'-deoxyadenosine + formate + L-methionine + 3 H(+). Its pathway is cofactor biosynthesis; thiamine diphosphate biosynthesis. Catalyzes the synthesis of the hydroxymethylpyrimidine phosphate (HMP-P) moiety of thiamine from aminoimidazole ribotide (AIR) in a radical S-adenosyl-L-methionine (SAM)-dependent reaction. The protein is Phosphomethylpyrimidine synthase of Escherichia coli O7:K1 (strain IAI39 / ExPEC).